A 385-amino-acid chain; its full sequence is 1-deoxy-D-xylulose 5-phosphate reductoisomerase (385 aa).

NADPH contacts are provided by T10, G11, S12, I13, G36, N38, and N121. A 1-deoxy-D-xylulose 5-phosphate-binding site is contributed by K122. An NADPH-binding site is contributed by E123. D147 is a binding site for Mn(2+). 1-deoxy-D-xylulose 5-phosphate contacts are provided by S148, E149, S173, and H196. E149 is a Mn(2+) binding site. G202 provides a ligand contact to NADPH. Positions 209, 214, 215, and 218 each coordinate 1-deoxy-D-xylulose 5-phosphate. E218 is a binding site for Mn(2+).

The protein belongs to the DXR family. Mg(2+) is required as a cofactor. Requires Mn(2+) as cofactor.

The enzyme catalyses 2-C-methyl-D-erythritol 4-phosphate + NADP(+) = 1-deoxy-D-xylulose 5-phosphate + NADPH + H(+). Its pathway is isoprenoid biosynthesis; isopentenyl diphosphate biosynthesis via DXP pathway; isopentenyl diphosphate from 1-deoxy-D-xylulose 5-phosphate: step 1/6. Its function is as follows. Catalyzes the NADPH-dependent rearrangement and reduction of 1-deoxy-D-xylulose-5-phosphate (DXP) to 2-C-methyl-D-erythritol 4-phosphate (MEP). This is 1-deoxy-D-xylulose 5-phosphate reductoisomerase from Exiguobacterium sp. (strain ATCC BAA-1283 / AT1b).